We begin with the raw amino-acid sequence, 118 residues long: Ly-6/neurotoxin-like protein 1 (118 aa).

The first 22 residues, 1–22, serve as a signal peptide directing secretion; it reads MTPLLTLFLVVLMGLPLAPVQA. Residues 23-107 form the UPAR/Ly6 domain; that stretch reads LDCHVCAYNG…LAIPATLALA (85 aa). Disulfide bonds link Cys25–Cys48, Cys28–Cys35, Cys41–Cys66, Cys70–Cys87, and Cys88–Cys93. Ser95 carries the GPI-anchor amidated serine lipid modification. Residues 96–118 constitute a propeptide, removed in mature form; it reads AGLAIPATLALAPVLLATLWGLL.

In terms of assembly, interacts with nAChRs containing alpha-4:beta-2 (CHRNA4:CHRNB2) and alpha-7 (CHRNA7) subunits. Interacts with CHRNA4 probably in the endoplasmic reticulum prior to nAChR pentameric assembly. Interacts with KCNA2/Potassium voltage-gated channel subfamily A member 2. As to expression, expressed in lung predominantly in airway epithelial cells, submucous glands, and smooth muscle cells, in endothelial and smooth muscle cells in vessel walls and in alveolar type II cells (at protein level). Also expressed in brain.

It localises to the cell membrane. It is found in the cell projection. The protein localises to the dendrite. Its subcellular location is the endoplasmic reticulum. Its function is as follows. Acts in different tissues through interaction to nicotinic acetylcholine receptors (nAChRs). The proposed role as modulator of nAChR activity seems to be dependent on the nAChR subtype and stoichiometry, and to involve an effect on nAChR trafficking and its cell surface expression, and on single channel properties of the nAChR inserted in the plasma membrane. Modulates functional properties of nicotinic acetylcholine receptors (nAChRs) to prevent excessive excitation, and hence neurodegeneration. Enhances desensitization by increasing both the rate and extent of desensitization of alpha-4:beta-2-containing nAChRs and slowing recovery from desensitization. Promotes large amplitude ACh-evoked currents through alpha-4:beta-2 nAChRs. Is involved in regulation of the nAChR pentameric assembly in the endoplasmic reticulum. Shifts stoichiometry from high sensitivity alpha-4(2):beta-2(3) to low sensitivity alpha-4(3):beta-2(2) nAChR. In vitro modulates alpha-3:beta-4-containing nAChRs. Reduces cell surface expression of (alpha-3:beta-4)(2):beta-4 and (alpha-3:beta-4)(2):alpha-5 nAChRs suggesting an interaction with nAChR alpha-3(-):(+)beta-4 subunit interfaces and an allosteric mode. Corresponding single channel effects characterized by decreased unitary conductance, altered burst proportions and enhanced desensitization/inactivation seem to depend on nAChR alpha:alpha subunit interfaces and are greater in (alpha-3:beta-2)(2):alpha-3 when compared to (alpha-3:beta-2)(2):alpha-5 nAChRs. Prevents plasticity in the primary visual cortex late in life. This Macaca mulatta (Rhesus macaque) protein is Ly-6/neurotoxin-like protein 1.